Consider the following 178-residue polypeptide: ATP synthase subunit delta (178 aa).

It belongs to the ATPase delta chain family. In terms of assembly, F-type ATPases have 2 components, F(1) - the catalytic core - and F(0) - the membrane proton channel. F(1) has five subunits: alpha(3), beta(3), gamma(1), delta(1), epsilon(1). F(0) has three main subunits: a(1), b(2) and c(10-14). The alpha and beta chains form an alternating ring which encloses part of the gamma chain. F(1) is attached to F(0) by a central stalk formed by the gamma and epsilon chains, while a peripheral stalk is formed by the delta and b chains.

The protein localises to the cell membrane. F(1)F(0) ATP synthase produces ATP from ADP in the presence of a proton or sodium gradient. F-type ATPases consist of two structural domains, F(1) containing the extramembraneous catalytic core and F(0) containing the membrane proton channel, linked together by a central stalk and a peripheral stalk. During catalysis, ATP synthesis in the catalytic domain of F(1) is coupled via a rotary mechanism of the central stalk subunits to proton translocation. In terms of biological role, this protein is part of the stalk that links CF(0) to CF(1). It either transmits conformational changes from CF(0) to CF(1) or is implicated in proton conduction. The protein is ATP synthase subunit delta of Acetivibrio thermocellus (strain ATCC 27405 / DSM 1237 / JCM 9322 / NBRC 103400 / NCIMB 10682 / NRRL B-4536 / VPI 7372) (Clostridium thermocellum).